The primary structure comprises 255 residues: Pimeloyl-[acyl-carrier protein] methyl ester esterase (255 aa).

Residues tryptophan 18, 78–79 (SL), and 139–143 (FLALD) each bind substrate. Catalysis depends on serine 78, which acts as the Nucleophile. Catalysis depends on residues aspartate 203 and histidine 233. Histidine 233 is a binding site for substrate.

It belongs to the AB hydrolase superfamily. Carboxylesterase BioH family. In terms of assembly, monomer.

The protein localises to the cytoplasm. It carries out the reaction 6-carboxyhexanoyl-[ACP] methyl ester + H2O = 6-carboxyhexanoyl-[ACP] + methanol + H(+). It participates in cofactor biosynthesis; biotin biosynthesis. In terms of biological role, the physiological role of BioH is to remove the methyl group introduced by BioC when the pimeloyl moiety is complete. It allows to synthesize pimeloyl-ACP via the fatty acid synthetic pathway through the hydrolysis of the ester bonds of pimeloyl-ACP esters. The protein is Pimeloyl-[acyl-carrier protein] methyl ester esterase of Xylella fastidiosa (strain M12).